Reading from the N-terminus, the 177-residue chain is Isopentenyl-diphosphate Delta-isomerase (177 aa).

Mn(2+) is bound by residues histidine 22 and histidine 28. The Nudix hydrolase domain maps to 26 to 160; the sequence is LRHMAISVFV…PERFTPWLRI (135 aa). Cysteine 62 is a catalytic residue. Mn(2+) is bound at residue histidine 64. Glutamate 82 contacts Mg(2+). Mn(2+) contacts are provided by glutamate 108 and glutamate 110. Glutamate 110 is an active-site residue.

This sequence belongs to the IPP isomerase type 1 family. Mg(2+) is required as a cofactor. It depends on Mn(2+) as a cofactor.

It localises to the cytoplasm. The catalysed reaction is isopentenyl diphosphate = dimethylallyl diphosphate. It participates in isoprenoid biosynthesis; dimethylallyl diphosphate biosynthesis; dimethylallyl diphosphate from isopentenyl diphosphate: step 1/1. It functions in the pathway porphyrin-containing compound metabolism; chlorophyll biosynthesis. Functionally, catalyzes the 1,3-allylic rearrangement of the homoallylic substrate isopentenyl (IPP) to its highly electrophilic allylic isomer, dimethylallyl diphosphate (DMAPP). This chain is Isopentenyl-diphosphate Delta-isomerase, found in Cereibacter sphaeroides (strain ATCC 17029 / ATH 2.4.9) (Rhodobacter sphaeroides).